Reading from the N-terminus, the 382-residue chain is Probable cytosolic iron-sulfur protein assembly protein 1 (382 aa).

WD repeat units lie at residues 9–48 (AHHD…KFPR), 55–107 (THTR…DNDE), 138–178 (GHEH…EEFE), 185–224 (EHQQ…DDWG), 231–278 (GHQG…SETN), 303–342 (AHTY…WEIE), and 349–382 (HGVH…NVWE).

It belongs to the WD repeat CIA1 family. Interacts with NAR1.

The protein localises to the cytoplasm. It localises to the nucleus. Its function is as follows. Essential component of the cytosolic iron-sulfur (Fe/S) protein assembly machinery. Required for the maturation of extramitochondrial Fe/S proteins. This chain is Probable cytosolic iron-sulfur protein assembly protein 1, found in Meyerozyma guilliermondii (strain ATCC 6260 / CBS 566 / DSM 6381 / JCM 1539 / NBRC 10279 / NRRL Y-324) (Yeast).